The sequence spans 489 residues: Protein LMBR1L (489 aa).

Residues 1-21 (MEAPDCEVLSVREQLFHERIR) lie on the Extracellular side of the membrane. Positions 1-59 (MEAPDCEVLSVREQLFHERIRECIISTLLFATLYILCHIFLTRFKKPAEFTTVDDADAT) are interaction with LGB. An LCN1-binding region spans residues 1 to 76 (MEAPDCEVLS…LCTFTLAIAL (76 aa)). The chain crosses the membrane as a helical span at residues 22 to 42 (ECIISTLLFATLYILCHIFLT). Over 43-66 (RFKKPAEFTTVDDADATVNKIALE) the chain is Cytoplasmic. The helical transmembrane segment at 67 to 87 (LCTFTLAIALGAVLLLPFSII) threads the bilayer. Residues 88–114 (SNEVLLSLPRNYYIQWLNGSLIHGLWN) lie on the Extracellular side of the membrane. A helical transmembrane segment spans residues 115–135 (LVFLFSNLSLIFLMPFAYFFT). At 136 to 154 (ESEGFAGSRKGVLGRVYET) the chain is on the cytoplasmic side. Residues 155-175 (VVMLMLLTLLVLGMVWVASAI) form a helical membrane-spanning segment. Residues 176–196 (VDNNKASRESLYDFWEYYLPY) lie on the Extracellular side of the membrane. A helical membrane pass occupies residues 197-217 (LYSCISFLGVLLLLVCTPLGL). Over 218–305 (ARMFSVTGKL…NLGYPLAMLC (88 aa)) the chain is Cytoplasmic. The helical transmembrane segment at 306–326 (LLVLTGLSVLIVAIHILELLI) threads the bilayer. Residues 327-350 (DEAAMPRGMQGASLGQVSFSKLGS) lie on the Extracellular side of the membrane. The helical transmembrane segment at 351 to 371 (FGAVVQVVLIFYLMVSSVVGF) threads the bilayer. At 372–388 (YSSPLFRSLRPRWHDTA) the chain is on the cytoplasmic side. Residues 389 to 409 (MTQIIGNCVCLLVLSSALPVF) traverse the membrane as a helical segment. Residues 410-431 (SRTLGLTRFDLLGDFGRFNWLG) are Extracellular-facing. A helical membrane pass occupies residues 432–452 (NFYIVFLYNAAFAGLTTLCLV). Topologically, residues 453–489 (KTFTAAVRAELIRAFGLDRLPLPVSGFPRASRKTQHQ) are cytoplasmic.

This sequence belongs to the LIMR family. In terms of assembly, dimer. Can also form higher oligomers. Interacts with LCN1; this interaction mediates the endocytosis of LCN1. Interacts with UBAC2, FAF2, VCP, AMFR, ZNRF3, CTNNB1, LRP6, GSK3A, GSK3B, FZD6, DVL2 and RNF43. Interaction with LGB and SCGB1A1 is controversial.

The protein resides in the cell membrane. Its subcellular location is the endoplasmic reticulum membrane. Functionally, plays an essential role in lymphocyte development by negatively regulating the canonical Wnt signaling pathway. In association with UBAC2 and E3 ubiquitin-protein ligase AMFR, promotes the ubiquitin-mediated degradation of CTNNB1 and Wnt receptors FZD6 and LRP6. LMBR1L stabilizes the beta-catenin destruction complex that is required for regulating CTNNB1 levels. Acts as a LCN1 receptor and can mediate its endocytosis. This is Protein LMBR1L (LMBR1L) from Macaca fascicularis (Crab-eating macaque).